Reading from the N-terminus, the 180-residue chain is Thioredoxin 3 (180 aa).

The Cytoplasmic portion of the chain corresponds to 1–3 (MAL). A helical; Signal-anchor for type II membrane protein transmembrane segment spans residues 4–24 (ICIGSVCFSLFHIGVIILLII). Over 25–180 (NYFSSHIKKI…FQKYCLEKAK (156 aa)) the chain is Lumenal. One can recognise a Thioredoxin domain in the interval 29–176 (SHIKKIFPSF…IEKAFQKYCL (148 aa)). Catalysis depends on nucleophile residues Cys99 and Cys102. Cys99 and Cys102 are oxidised to a cystine.

It belongs to the thioredoxin family. Post-translationally, the disulfide bond between Cys-99 and Cys-102 acts as a redox-active center and is reduced by thioredoxin reductase TRXR.

It is found in the endoplasmic reticulum membrane. Functionally, participates in various redox reactions through the reversible oxidation of its active center dithiol to a disulfide and catalyzes dithiol-disulfide exchange reactions. This is Thioredoxin 3 from Plasmodium falciparum (isolate 3D7).